We begin with the raw amino-acid sequence, 339 residues long: Tryptophan--tRNA ligase (339 aa).

Residues 11–13 (QPT) and 19–20 (GN) each bind ATP. Residues 12–20 (PTGAIHIGN) carry the 'HIGH' region motif. Asp-135 provides a ligand contact to L-tryptophan. Residues 147-149 (GED), Ile-191, and 200-204 (KMSKS) contribute to the ATP site. Positions 200–204 (KMSKS) match the 'KMSKS' region motif.

The protein belongs to the class-I aminoacyl-tRNA synthetase family. As to quaternary structure, homodimer.

Its subcellular location is the cytoplasm. It catalyses the reaction tRNA(Trp) + L-tryptophan + ATP = L-tryptophyl-tRNA(Trp) + AMP + diphosphate + H(+). Catalyzes the attachment of tryptophan to tRNA(Trp). This chain is Tryptophan--tRNA ligase, found in Prochlorococcus marinus (strain SARG / CCMP1375 / SS120).